Consider the following 141-residue polypeptide: Nucleoside diphosphate kinase (141 aa).

Residues Lys-11, Phe-59, Arg-87, Thr-93, Arg-104, and Asn-114 each contribute to the ATP site. His-117 acts as the Pros-phosphohistidine intermediate in catalysis.

The protein belongs to the NDK family. As to quaternary structure, homotetramer. It depends on Mg(2+) as a cofactor.

It is found in the cytoplasm. It catalyses the reaction a 2'-deoxyribonucleoside 5'-diphosphate + ATP = a 2'-deoxyribonucleoside 5'-triphosphate + ADP. The catalysed reaction is a ribonucleoside 5'-diphosphate + ATP = a ribonucleoside 5'-triphosphate + ADP. Major role in the synthesis of nucleoside triphosphates other than ATP. The ATP gamma phosphate is transferred to the NDP beta phosphate via a ping-pong mechanism, using a phosphorylated active-site intermediate. The polypeptide is Nucleoside diphosphate kinase (Acidithiobacillus ferrooxidans (strain ATCC 53993 / BNL-5-31) (Leptospirillum ferrooxidans (ATCC 53993))).